A 288-amino-acid chain; its full sequence is Probable ketoamine kinase SAOUHSC_02908 (288 aa).

86-88 (TYL) is a binding site for ATP. Aspartate 191 acts as the Proton acceptor in catalysis.

This sequence belongs to the fructosamine kinase family.

The enzyme catalyses N(6)-(D-ribulosyl)-L-lysine + ATP = N(6)-(3-O-phospho-D-ribulosyl)-L-lysine + ADP + H(+). It carries out the reaction N(6)-(D-erythrulosyl)-L-lysine + ATP = N(6)-(3-O-phospho-D-erythrulosyl)-L-lysine + ADP + H(+). It catalyses the reaction N(6)-D-ribulosyl-L-lysyl-[protein] + ATP = N(6)-(3-O-phospho-D-ribulosyl)-L-lysyl-[protein] + ADP + H(+). The catalysed reaction is N(6)-(D-erythrulosyl)-L-lysyl-[protein] + ATP = N(6)-(3-O-phospho-D-erythrulosyl)-L-lysyl-[protein] + ADP + H(+). In terms of biological role, ketoamine kinase that phosphorylates ketoamines, such as erythruloselysine and ribuloselysine, on the third carbon of the sugar moiety to generate ketoamine 3-phosphate. Has higher activity on free lysine (erythruloselysine and ribuloselysine), than on ribuloselysine and erythruloselysine residues on glycated proteins. This is Probable ketoamine kinase SAOUHSC_02908 from Staphylococcus aureus (strain NCTC 8325 / PS 47).